A 391-amino-acid polypeptide reads, in one-letter code: MTNGLYLDCHAGIAGDMLLSSLVDLGADVDYVHQHLLSLPLDQFSLNFAKKNKQGIQAMGLTIDFEEAHHHRKASDIFNMINESTLPNRVKERSMLIFDVIAQAEAKIHGMKIEDVHFHEVGAMDSIIDIIGSCLALEDLGIDEIKSSPVPTGNGKIKIAHGIYPIPAPATAEILKDIPLATFDVQSELTTPTGAAFIKALATHIGPLSAVSMSNIGYGCGTKDFEFPNVIRAIQYTATETTPNQVQVLECQIDDMTPETLGYFIEQVINEGALDAFYTPITMKKSRPATQLTVISSVTQAKEFEDFILKHTTSLGVRSYAVNRKILHRQFQTIHTTYGAILVKLAMKDNKIIKAKPEFEDVKNAALHSGQSFTNVYNDIQNEVRKHIQID.

It belongs to the LarC family.

It catalyses the reaction Ni(II)-pyridinium-3,5-bisthiocarboxylate mononucleotide = pyridinium-3,5-bisthiocarboxylate mononucleotide + Ni(2+). Functionally, involved in the biosynthesis of a nickel-pincer cofactor ((SCS)Ni(II) pincer complex). Binds Ni(2+), and functions in nickel delivery to pyridinium-3,5-bisthiocarboxylic acid mononucleotide (P2TMN), to form the mature cofactor. Is thus probably required for the activation of nickel-pincer cofactor-dependent enzymes. The protein is Pyridinium-3,5-bisthiocarboxylic acid mononucleotide nickel insertion protein of Staphylococcus saprophyticus subsp. saprophyticus (strain ATCC 15305 / DSM 20229 / NCIMB 8711 / NCTC 7292 / S-41).